The sequence spans 65 residues: Mating-type pheromone BBP1(2) (65 aa).

Cys-62 bears the Cysteine methyl ester mark. A lipid anchor (S-farnesyl cysteine) is attached at Cys-62. Residues 63 to 65 (VVA) constitute a propeptide, removed in mature form.

The protein localises to the cell membrane. Its function is as follows. Activates B-regulated development. The polypeptide is Mating-type pheromone BBP1(2) (BBP1(2)) (Schizophyllum commune (Split gill fungus)).